The primary structure comprises 510 residues: Nucleosome assembly protein 1-like 3 (510 aa).

2 disordered regions span residues Met-1–Asn-99 and Pro-161–Asp-311. A compositionally biased stretch (low complexity) spans Ser-35–Ser-74. Acidic residues predominate over residues Pro-161 to Gln-182. Basic and acidic residues-rich tracts occupy residues Pro-200–Lys-229, Lys-235–Met-246, and Glu-254–Lys-300.

Belongs to the nucleosome assembly protein (NAP) family.

Its subcellular location is the nucleus. In Pongo abelii (Sumatran orangutan), this protein is Nucleosome assembly protein 1-like 3 (NAP1L3).